The chain runs to 1460 residues: Probable outer membrane protein PmpC (1460 aa).

The first 20 residues, 1-20, serve as a signal peptide directing secretion; it reads MKFLSATAVFAAALPSITSA. Disordered stretches follow at residues 21–48, 92–212, 279–372, 455–549, and 993–1021; these read SSVESQIETKDLNSSRTGSSSSQSFTEI, SEEN…PDKD, TPPA…ESGS, TPEE…DSSI, and VDTSTNSGNSSSTPPSSNTPPNSTPTAQA. The span at 34–44 shows a compositional bias: low complexity; it reads SSRTGSSSSQS. Polar residues predominate over residues 97–114; it reads QASFQDSAQNQTENASEG. Residues 115-137 show a composition bias toward low complexity; it reads NSPNSENTNQSSTTETESITTDE. Residues 138–155 are compositionally biased toward polar residues; the sequence is QVQNDNESAASVPTTVET. Residues 290-327 show a composition bias toward low complexity; sequence NDPSGSNGNDGSDDSNSSGNTDSNESNPNNSASNNTGS. Residues 328–358 are compositionally biased toward polar residues; it reads ENELSSSTPSAQLPNPATPFLSSVSTNSQPI. The segment covering 461 to 471 has biased composition (low complexity); sequence LKSSQLNNQNP. Over residues 487 to 501 the composition is skewed to polar residues; it reads SLETSPITNQDSASS. Low complexity-rich tracts occupy residues 504-548 and 995-1018; these read AIFR…SDSS and TSTNSGNSSSTPPSSNTPPNSTPT. Residues 1167 to 1460 form the Autotransporter domain; sequence DEVAYNNLWI…MINCGARMTF (294 aa).

The protein belongs to the PMP outer membrane protein family.

The protein resides in the secreted. It is found in the cell wall. The protein localises to the cell outer membrane. This is Probable outer membrane protein PmpC (pmpC) from Chlamydia muridarum (strain MoPn / Nigg).